A 117-amino-acid chain; its full sequence is Ribosome-binding factor A (117 aa).

It belongs to the RbfA family. In terms of assembly, monomer. Binds 30S ribosomal subunits, but not 50S ribosomal subunits or 70S ribosomes.

It localises to the cytoplasm. Its function is as follows. One of several proteins that assist in the late maturation steps of the functional core of the 30S ribosomal subunit. Associates with free 30S ribosomal subunits (but not with 30S subunits that are part of 70S ribosomes or polysomes). Required for efficient processing of 16S rRNA. May interact with the 5'-terminal helix region of 16S rRNA. This is Ribosome-binding factor A from Lacticaseibacillus casei (strain BL23) (Lactobacillus casei).